Reading from the N-terminus, the 421-residue chain is Probable sugar-binding periplasmic protein (421 aa).

The first 27 residues, 1–27, serve as a signal peptide directing secretion; the sequence is MHKLLKLAAMGTAACALLAGMAPVANA.

It belongs to the bacterial solute-binding protein 1 family.

The protein resides in the periplasm. Functionally, part of a binding-protein-dependent transport system for a sugar. In Brucella melitensis biotype 1 (strain ATCC 23456 / CCUG 17765 / NCTC 10094 / 16M), this protein is Probable sugar-binding periplasmic protein.